Here is a 704-residue protein sequence, read N- to C-terminus: SH3KBP1-binding protein 1 (704 aa).

The residue at position 2 (A2) is an N-acetylalanine. The BTB domain maps to E19 to G88. The tract at residues L145 to P165 is disordered. T163 carries the phosphothreonine modification. 5 WD repeats span residues R233–E280, V283–Q322, V324–K359, V428–S466, and L548–G586. Positions A611–S644 are enriched in low complexity. The tract at residues A611–F704 is disordered. Positions P618 to R623 match the PXXXPR motif. S644 and S646 each carry phosphoserine. Positions P678–R683 match the PXXXPR motif.

Belongs to the KCTD3 family. In terms of assembly, monomer. Interacts with CUL3; interaction is direct and forms a 5:5 heterodecamer. Interacts (via PXXXPR motifs) with SH3KBP1 (via SH3 domains). Directly interacts with cathepsin B/CTSB.

Its subcellular location is the lysosome. Its function is as follows. Inhibits CBL-SH3KBP1 complex mediated down-regulation of EGFR signaling by sequestration of SH3KBP1. Binds to SH3KBP1 and prevents its interaction with CBL and inhibits translocation of SH3KBP1 to EGFR containing vesicles upon EGF stimulation. This is SH3KBP1-binding protein 1 (SHKBP1) from Bos taurus (Bovine).